A 119-amino-acid polypeptide reads, in one-letter code: C-C motif chemokine 24 (119 aa).

Positions 1-26 (MAGSATIVAGLLLLVACACCIFPIDS) are cleaved as a signal peptide. 2 disulfides stabilise this stretch: Cys33-Cys58 and Cys34-Cys74. 2 N-linked (GlcNAc...) asparagine glycosylation sites follow: Asn54 and Asn115. The segment at 96–119 (PSKGAKAVRTKFAVQRRRGNSTEV) is disordered. A compositionally biased stretch (basic residues) spans 101-119 (KAVRTKFAVQRRRGNSTEV).

Belongs to the intercrine beta (chemokine CC) family. In terms of tissue distribution, highest expression in jejunum and spleen. Lower levels found in liver and lung. No expression detected in kidney, thymus, brain or testis.

Its subcellular location is the secreted. Chemotactic for resting T-lymphocytes, and eosinophils. Has lower chemotactic activity for neutrophils but none for monocytes and activated lymphocytes. Is a strong suppressor of colony formation by a multipotential hematopoietic progenitor cell line. Binds to CCR3. In Mus musculus (Mouse), this protein is C-C motif chemokine 24.